The sequence spans 378 residues: Apolipoprotein A-IV (378 aa).

A signal peptide spans 1–20 (MFLKAVVLTLSLVAITGARA). Tandem repeats lie at residues 33 to 54 (DYFS…QSEL), 60 to 81 (SVTK…RNSW), 82 to 98 (EHSR…RQVG), 110 to 130 (PNCD…QAVG), 131 to 152 (PYAE…NQLT), 153 to 174 (SHAQ…SSLT), 175 to 196 (PFAD…GHLT), 197 to 218 (PYTD…RSLA), 219 to 240 (PYAQ…FQMK), 241 to 262 (KNAE…QRLA), 263 to 280 (PVAE…AGLH), 281 to 302 (KSLA…RNVG), and 303 to 324 (PYGE…QKLG). The interval 33–324 (DYFSQLSNNA…QVEELRQKLG (292 aa)) is 13 X 22 AA approximate tandem repeats. Residues 354–378 (EKESQDTPVALPKQEQEQSAVPLES) are disordered.

The protein belongs to the apolipoprotein A1/A4/E family. Homodimer.

Its subcellular location is the secreted. May have a role in chylomicrons and VLDL secretion and catabolism. Required for efficient activation of lipoprotein lipase by ApoC-II; potent activator of LCAT. Apoa-IV is a major component of HDL and chylomicrons. This Canis lupus familiaris (Dog) protein is Apolipoprotein A-IV.